A 336-amino-acid polypeptide reads, in one-letter code: Protein RecA (336 aa).

66–73 contributes to the ATP binding site; that stretch reads GNESSGKT.

This sequence belongs to the RecA family.

The protein localises to the cytoplasm. Can catalyze the hydrolysis of ATP in the presence of single-stranded DNA, the ATP-dependent uptake of single-stranded DNA by duplex DNA, and the ATP-dependent hybridization of homologous single-stranded DNAs. It interacts with LexA causing its activation and leading to its autocatalytic cleavage. The polypeptide is Protein RecA (Mycoplasma pneumoniae (strain ATCC 29342 / M129 / Subtype 1) (Mycoplasmoides pneumoniae)).